We begin with the raw amino-acid sequence, 274 residues long: Large ribosomal subunit protein uL2 (274 aa).

Residues 220-259 (VRGAAMNPRDHPHGGGEGRAPRGMSTPKTKWGKPARGVKT) are disordered. The segment covering 227–239 (PRDHPHGGGEGRA) has biased composition (basic and acidic residues). Basic residues predominate over residues 249–259 (KWGKPARGVKT).

It belongs to the universal ribosomal protein uL2 family. In terms of assembly, part of the 50S ribosomal subunit. Forms a bridge to the 30S subunit in the 70S ribosome.

In terms of biological role, one of the primary rRNA binding proteins. Required for association of the 30S and 50S subunits to form the 70S ribosome, for tRNA binding and peptide bond formation. It has been suggested to have peptidyltransferase activity; this is somewhat controversial. Makes several contacts with the 16S rRNA in the 70S ribosome. The protein is Large ribosomal subunit protein uL2 of Chloroflexus aggregans (strain MD-66 / DSM 9485).